Here is a 379-residue protein sequence, read N- to C-terminus: V-type proton ATPase subunit S1 (379 aa).

The N-terminal stretch at 1-17 (MLWKSLIALCVIGAAVA) is a signal peptide. Residues 18-333 (EQTPVFLWGA…WDCVGFVTPG (316 aa)) are Lumenal-facing. Asn-225 and Asn-284 each carry an N-linked (GlcNAc...) asparagine glycan. A disulfide bond links Cys-282 and Cys-326. Residues 334–354 (ILMGLFVVALLLVIMFVGVCW) traverse the membrane as a helical segment. Topologically, residues 355–379 (MMDINTMDRFDDPKGKTITINAAAE) are cytoplasmic.

This sequence belongs to the vacuolar ATPase subunit S1 family. Accessory component of the multisubunit proton-transporting vacuolar (V)-ATPase protein pump. May interact with ATP6AP2.

The protein localises to the endoplasmic reticulum membrane. Functionally, accessory subunit of the proton-transporting vacuolar (V)-ATPase protein pump, which is required for luminal acidification of secretory vesicles. The chain is V-type proton ATPase subunit S1 from Drosophila melanogaster (Fruit fly).